Consider the following 707-residue polypeptide: MGQEKHVFTIDWAGRQLTVEAGQLAKQANGAVMVRYGDTAVLSTATASKEPKPLDFFPLTVNYEERLYAVGKIPGGFIKREGRPSEKAVLASRLIDRPIRPLFADGFRNEVQVISIVMSVDQDCSSEMAAMFGSSLALCVSDIPFEGPIAGVTVGRIDGKFVINPTVDQLEKSDINLIVAGTKDAINMVEAGADEVPEEIMLEAIMFGHEEIKRLIAFQEEIVAAVGKEKTEIELYEIDEELSEKVKSLAEPDLLSAIQVHEKHAREDAINEVKNAVVAKFEEEEHDEDTIKKVKQTLSKLVKNEVRRLITEEKVRPDGRGVDQIRPLSSEVGLLPRTHGSGLFTRGQTQALSVCTLGALGDVQILDGLGVEESKRFMHHYNFPQFSVGETGPMRGPGRREIGHGALGERALEPVIPNEKDFPYTVRLVSEVLESNGSTSQASICASTLAMMDAGVPIKAPVAGIAMGLVKSGEYYTVLTDIQGMEDALGDMDFKVAGTEKGVTALQMDIKIEGLSREILEEALQQAKKGRMEILNSMLSTLGESRKELSQYAPKILTMNINPDKIRDVIGPSGKQINKIIEDTGVKIDIEQDGTIFISSTDESSNQKAKKIIEDLVREVEVGQLYLGKVKRIEKFGAFVEIFSGKDGLVHISELALERVGKVEDVVKIGDEILVKVTEIDKQGRVNLSRKAVLREEKEKEQEQQQS.

The Mg(2+) site is built by D487 and D493. The region spanning 554–613 (PKILTMNINPDKIRDVIGPSGKQINKIIEDTGVKIDIEQDGTIFISSTDESSNQKAKKII) is the KH domain. One can recognise an S1 motif domain in the interval 623 to 691 (GQLYLGKVKR…KQGRVNLSRK (69 aa)).

This sequence belongs to the polyribonucleotide nucleotidyltransferase family. Mg(2+) is required as a cofactor.

It localises to the cytoplasm. It catalyses the reaction RNA(n+1) + phosphate = RNA(n) + a ribonucleoside 5'-diphosphate. Its function is as follows. Involved in mRNA degradation. Catalyzes the phosphorolysis of single-stranded polyribonucleotides processively in the 3'- to 5'-direction. The chain is Polyribonucleotide nucleotidyltransferase from Bacillus velezensis (strain DSM 23117 / BGSC 10A6 / LMG 26770 / FZB42) (Bacillus amyloliquefaciens subsp. plantarum).